The sequence spans 173 residues: Large ribosomal subunit protein uL16 (173 aa).

The protein belongs to the universal ribosomal protein uL16 family.

The protein is Large ribosomal subunit protein uL16 of Methanococcus aeolicus (strain ATCC BAA-1280 / DSM 17508 / OCM 812 / Nankai-3).